A 982-amino-acid chain; its full sequence is Little elongation complex subunit 2 (982 aa).

2 positions are modified to phosphoserine: serine 17 and serine 326. Positions 410-427 (TTKVSKSPSPASTSTVPN) are enriched in polar residues. Disordered regions lie at residues 410 to 450 (TTKV…PDIS) and 473 to 504 (GMDG…PLIQ). The span at 479–497 (EECKNKDDQGFESCEKVSN) shows a compositional bias: basic and acidic residues. A Phosphoserine modification is found at serine 571. Phosphothreonine is present on threonine 573. Disordered regions lie at residues 595–623 (VGSN…NTAC), 672–697 (ENSK…KSGW), and 930–982 (PKSL…RKIT). Residues 597–610 (SNLSSRPASPNSSS) are compositionally biased toward low complexity. Composition is skewed to polar residues over residues 611 to 623 (GQAS…NTAC) and 672 to 683 (ENSKQPSVSEQL). The segment covering 684 to 697 (SGPSDSSSWPKSGW) has biased composition (low complexity). The span at 956–970 (SMETKSSCLPAQQVE) shows a compositional bias: polar residues.

This sequence belongs to the ICE2 family. In terms of assembly, component of the little elongation complex (LEC), at least composed of ELL (ELL, ELL2 or ELL3), ZC3H8, ICE1 and ICE2. Interacts with ICE1 (via C-terminus domain). Interacts with ELL. In terms of tissue distribution, expressed at low levels in lung and testis.

Its subcellular location is the nucleus. Its function is as follows. Component of the little elongation complex (LEC), a complex required to regulate small nuclear RNA (snRNA) gene transcription by RNA polymerase II and III. This is Little elongation complex subunit 2 (ICE2) from Homo sapiens (Human).